Consider the following 307-residue polypeptide: Opsin-like protein carO (307 aa).

Asparagine 28 is a glycosylation site (N-linked (GlcNAc...) asparagine). Helical transmembrane passes span 36-56 (WYWA…GLGM), 64-84 (IFHY…FTMA), 118-138 (WFLT…MPWP), 140-160 (VLWV…GALV), 166-186 (WGYF…LAWE), 202-222 (FVMC…AWGV), and 235-255 (AVFY…LLLW). Residues 280-307 (GPNNKVASGHGARNDTATASGSNVNPNA) are disordered. N-linked (GlcNAc...) asparagine glycosylation is present at asparagine 293. Residues 294-307 (DTATASGSNVNPNA) are compositionally biased toward polar residues.

Belongs to the archaeal/bacterial/fungal opsin family.

Its subcellular location is the membrane. Opsin-like protein; part of the car gene cluster that mediates the biosynthesis of neurosporaxanthin, a carboxylic apocarotenoid acting as an essential protective pigment and leading to orange pigmentation. The exact role of carO in carotenoid biosynthesis is not known yet, but it could be involved in the regulation of the pathway by light or other stimuli. The protein is Opsin-like protein carO of Fusarium fujikuroi (Bakanae and foot rot disease fungus).